Here is a 142-residue protein sequence, read N- to C-terminus: HTH-type transcriptional regulator MntR (142 aa).

Positions 1 to 63 constitute an HTH dtxR-type domain; that stretch reads MPTPSMEDYI…YEKYRGLVLT (63 aa). Residues D8, E11, H77, E99, E102, and H103 each coordinate Mn(2+).

It belongs to the DtxR/MntR family. In terms of assembly, homodimer.

It localises to the cytoplasm. DNA binding is strongly activated by Mn(2+). Its function is as follows. Central regulator of manganese homeostasis. The polypeptide is HTH-type transcriptional regulator MntR (Bacillus cytotoxicus (strain DSM 22905 / CIP 110041 / 391-98 / NVH 391-98)).